We begin with the raw amino-acid sequence, 67 residues long: Large ribosomal subunit protein uL29 (67 aa).

This sequence belongs to the universal ribosomal protein uL29 family.

This chain is Large ribosomal subunit protein uL29, found in Methanosarcina mazei (strain ATCC BAA-159 / DSM 3647 / Goe1 / Go1 / JCM 11833 / OCM 88) (Methanosarcina frisia).